The primary structure comprises 169 residues: MATVKKKLDAGQFNLKDQVVAINRVTKVVKGGKNLSFAALVVVGDPSAAVVGYGSGKAKEVPQAIRKGIESAKKNLVKVNLSQTSIPHQVLGRYGSGRVMLKPAPEGTGVIAGGAVRAVMTSAGVQNVLTKSIGTTNPHNVIKATFEALKQLRDRREVAAGRGKTVEEL.

The S5 DRBM domain maps to 15–79; it reads LKDQVVAINR…ESAKKNLVKV (65 aa).

The protein belongs to the universal ribosomal protein uS5 family. Part of the 30S ribosomal subunit. Contacts proteins S4 and S8.

With S4 and S12 plays an important role in translational accuracy. Functionally, located at the back of the 30S subunit body where it stabilizes the conformation of the head with respect to the body. This is Small ribosomal subunit protein uS5 from Koribacter versatilis (strain Ellin345).